The sequence spans 214 residues: 3-isopropylmalate dehydratase small subunit (214 aa).

It belongs to the LeuD family. LeuD type 1 subfamily. In terms of assembly, heterodimer of LeuC and LeuD.

The enzyme catalyses (2R,3S)-3-isopropylmalate = (2S)-2-isopropylmalate. Its pathway is amino-acid biosynthesis; L-leucine biosynthesis; L-leucine from 3-methyl-2-oxobutanoate: step 2/4. In terms of biological role, catalyzes the isomerization between 2-isopropylmalate and 3-isopropylmalate, via the formation of 2-isopropylmaleate. The polypeptide is 3-isopropylmalate dehydratase small subunit (Pseudomonas fluorescens (strain ATCC BAA-477 / NRRL B-23932 / Pf-5)).